Reading from the N-terminus, the 467-residue chain is Asparagine--tRNA ligase (467 aa).

This sequence belongs to the class-II aminoacyl-tRNA synthetase family. In terms of assembly, homodimer.

It is found in the cytoplasm. The enzyme catalyses tRNA(Asn) + L-asparagine + ATP = L-asparaginyl-tRNA(Asn) + AMP + diphosphate + H(+). The chain is Asparagine--tRNA ligase from Mannheimia succiniciproducens (strain KCTC 0769BP / MBEL55E).